The primary structure comprises 281 residues: Pantothenate synthetase (281 aa).

30–37 is an ATP binding site; the sequence is MGNLHQGH. His-37 (proton donor) is an active-site residue. Gln-61 provides a ligand contact to (R)-pantoate. Gln-61 is a binding site for beta-alanine. 149 to 152 lines the ATP pocket; sequence GNKD. Position 155 (Gln-155) interacts with (R)-pantoate. Residues Ile-178 and 186 to 189 each bind ATP; that span reads MSSR.

The protein belongs to the pantothenate synthetase family. Homodimer.

It localises to the cytoplasm. The enzyme catalyses (R)-pantoate + beta-alanine + ATP = (R)-pantothenate + AMP + diphosphate + H(+). Its pathway is cofactor biosynthesis; (R)-pantothenate biosynthesis; (R)-pantothenate from (R)-pantoate and beta-alanine: step 1/1. Functionally, catalyzes the condensation of pantoate with beta-alanine in an ATP-dependent reaction via a pantoyl-adenylate intermediate. This Shewanella baltica (strain OS223) protein is Pantothenate synthetase.